The chain runs to 243 residues: ATP synthase subunit a, chloroplastic (243 aa).

The next 5 membrane-spanning stretches (helical) occupy residues Gly-32–Gly-52, Thr-96–Ile-116, Asp-129–Ile-149, Leu-195–Leu-215, and Gly-216–Gly-236.

The protein belongs to the ATPase A chain family. In terms of assembly, F-type ATPases have 2 components, CF(1) - the catalytic core - and CF(0) - the membrane proton channel. CF(1) has five subunits: alpha(3), beta(3), gamma(1), delta(1), epsilon(1). CF(0) has four main subunits: a, b, b' and c.

The protein localises to the plastid. The protein resides in the chloroplast thylakoid membrane. In terms of biological role, key component of the proton channel; it plays a direct role in the translocation of protons across the membrane. This chain is ATP synthase subunit a, chloroplastic, found in Tetradesmus obliquus (Green alga).